A 1048-amino-acid polypeptide reads, in one-letter code: Anguibactin system regulator (1048 aa).

The 75-residue stretch at 965-1039 folds into the Carrier domain; it reads PIITASEDRV…AFAIIMDRCR (75 aa).

This sequence belongs to the ATP-dependent AMP-binding enzyme family.

The protein operates within siderophore biosynthesis; anguibactin biosynthesis. Its function is as follows. Bifunctional protein that plays an essential role in virulence. Plays a role in both production of the siderophore anguibactin and regulation of iron transport genes. This chain is Anguibactin system regulator (angR), found in Vibrio anguillarum (strain ATCC 68554 / 775) (Listonella anguillarum).